Here is a 306-residue protein sequence, read N- to C-terminus: Palmitoyl-protein thioesterase ABHD10, mitochondrial (306 aa).

The N-terminal 52 residues, methionine 1 to lysine 52, are a transit peptide targeting the mitochondrion. One can recognise an AB hydrolase-1 domain in the interval isoleucine 78–threonine 177. Catalysis depends on charge relay system residues serine 152, aspartate 249, and histidine 279.

The protein belongs to the AB hydrolase superfamily.

The protein localises to the mitochondrion. The enzyme catalyses S-hexadecanoyl-L-cysteinyl-[protein] + H2O = L-cysteinyl-[protein] + hexadecanoate + H(+). It carries out the reaction mycophenolic acid O-acyl-beta-D-glucuronide + H2O = mycophenolate + D-glucuronate + H(+). Its activity is regulated as follows. Inhibited by palmostatin-B. Its function is as follows. Acts as an acyl-protein thioesterase that hydrolyzes fatty acids from acylated residues in proteins. Regulates the mitochondrial S-depalmitoylation of the nucleophilic active site residue of peroxiredoxin-5/PRDX5, a key antioxidant protein, therefore modulating mitochondrial antioxidant ability. Also catalyzes the deglucuronidation of mycophenolic acid acyl-glucuronide, an active metabolite of the immunosuppressant drug mycophenolate. The sequence is that of Palmitoyl-protein thioesterase ABHD10, mitochondrial (ABHD10) from Pongo abelii (Sumatran orangutan).